The primary structure comprises 121 residues: Small ribosomal subunit protein uS13 (121 aa).

The interval 97 to 121 is disordered; that stretch reads VRGQRTRTNARTRRGARKTVAGKKK. The span at 100-121 shows a compositional bias: basic residues; the sequence is QRTRTNARTRRGARKTVAGKKK.

This sequence belongs to the universal ribosomal protein uS13 family. As to quaternary structure, part of the 30S ribosomal subunit. Forms a loose heterodimer with protein S19. Forms two bridges to the 50S subunit in the 70S ribosome.

In terms of biological role, located at the top of the head of the 30S subunit, it contacts several helices of the 16S rRNA. In the 70S ribosome it contacts the 23S rRNA (bridge B1a) and protein L5 of the 50S subunit (bridge B1b), connecting the 2 subunits; these bridges are implicated in subunit movement. Contacts the tRNAs in the A and P-sites. The sequence is that of Small ribosomal subunit protein uS13 from Synechococcus sp. (strain CC9902).